Here is a 572-residue protein sequence, read N- to C-terminus: Proline--tRNA ligase (572 aa).

It belongs to the class-II aminoacyl-tRNA synthetase family. ProS type 1 subfamily. As to quaternary structure, homodimer.

The protein localises to the cytoplasm. The enzyme catalyses tRNA(Pro) + L-proline + ATP = L-prolyl-tRNA(Pro) + AMP + diphosphate. Its function is as follows. Catalyzes the attachment of proline to tRNA(Pro) in a two-step reaction: proline is first activated by ATP to form Pro-AMP and then transferred to the acceptor end of tRNA(Pro). As ProRS can inadvertently accommodate and process non-cognate amino acids such as alanine and cysteine, to avoid such errors it has two additional distinct editing activities against alanine. One activity is designated as 'pretransfer' editing and involves the tRNA(Pro)-independent hydrolysis of activated Ala-AMP. The other activity is designated 'posttransfer' editing and involves deacylation of mischarged Ala-tRNA(Pro). The misacylated Cys-tRNA(Pro) is not edited by ProRS. This Salmonella arizonae (strain ATCC BAA-731 / CDC346-86 / RSK2980) protein is Proline--tRNA ligase.